The following is a 101-amino-acid chain: NAD(P)H-quinone oxidoreductase subunit 4L, chloroplastic (101 aa).

3 consecutive transmembrane segments (helical) span residues 2–22, 32–52, and 61–81; these read MLEH…YGLI, MCLE…SDFF, and IFSI…PAIV.

It belongs to the complex I subunit 4L family. As to quaternary structure, NDH is composed of at least 16 different subunits, 5 of which are encoded in the nucleus.

Its subcellular location is the plastid. The protein resides in the chloroplast thylakoid membrane. It catalyses the reaction a plastoquinone + NADH + (n+1) H(+)(in) = a plastoquinol + NAD(+) + n H(+)(out). The catalysed reaction is a plastoquinone + NADPH + (n+1) H(+)(in) = a plastoquinol + NADP(+) + n H(+)(out). In terms of biological role, NDH shuttles electrons from NAD(P)H:plastoquinone, via FMN and iron-sulfur (Fe-S) centers, to quinones in the photosynthetic chain and possibly in a chloroplast respiratory chain. The immediate electron acceptor for the enzyme in this species is believed to be plastoquinone. Couples the redox reaction to proton translocation, and thus conserves the redox energy in a proton gradient. The chain is NAD(P)H-quinone oxidoreductase subunit 4L, chloroplastic from Morus indica (Mulberry).